We begin with the raw amino-acid sequence, 274 residues long: Glutamate racemase (274 aa).

Substrate contacts are provided by residues 10 to 11 and 42 to 43; these read DS and YG. Cys73 functions as the Proton donor/acceptor in the catalytic mechanism. 74–75 is a binding site for substrate; it reads NT. Catalysis depends on Cys184, which acts as the Proton donor/acceptor. 185-186 serves as a coordination point for substrate; sequence TH.

Belongs to the aspartate/glutamate racemases family.

It carries out the reaction L-glutamate = D-glutamate. It participates in cell wall biogenesis; peptidoglycan biosynthesis. Provides the (R)-glutamate required for cell wall biosynthesis. The protein is Glutamate racemase of Latilactobacillus sakei subsp. sakei (strain 23K) (Lactobacillus sakei subsp. sakei).